The chain runs to 239 residues: Ureidoacrylate amidohydrolase RutB (239 aa).

D35 (proton acceptor) is an active-site residue. The active site involves K144. C177 serves as the catalytic Nucleophile.

This sequence belongs to the isochorismatase family. RutB subfamily.

It catalyses the reaction (Z)-3-ureidoacrylate + H2O + H(+) = (Z)-3-aminoacrylate + NH4(+) + CO2. The enzyme catalyses (Z)-3-ureidoacrylate + H2O = (Z)-3-aminoacrylate + carbamate + H(+). It carries out the reaction (Z)-2-methylureidoacrylate + H2O + H(+) = (Z)-2-methylaminoacrylate + NH4(+) + CO2. In terms of biological role, hydrolyzes ureidoacrylate to form aminoacrylate and carbamate. The carbamate hydrolyzes spontaneously, thereby releasing one of the nitrogen atoms of the pyrimidine ring as ammonia and one of its carbon atoms as CO2. The sequence is that of Ureidoacrylate amidohydrolase RutB from Caulobacter segnis (strain ATCC 21756 / DSM 7131 / JCM 7823 / NBRC 15250 / LMG 17158 / TK0059) (Mycoplana segnis).